The sequence spans 148 residues: UPF0756 membrane protein KPN78578_11500 (148 aa).

4 helical membrane passes run 14–34 (ALGF…LIIV), 51–71 (LTVG…SGTL), 86–106 (LLAI…VSLM), and 121–141 (VLGV…AGII).

It belongs to the UPF0756 family.

The protein localises to the cell membrane. The chain is UPF0756 membrane protein KPN78578_11500 from Klebsiella pneumoniae subsp. pneumoniae (strain ATCC 700721 / MGH 78578).